Reading from the N-terminus, the 493-residue chain is MWPQDPSRKEVLRFAVSCRILTLMLQALFNAIIPDHHAEAFSPPRLAPSGFVDQLVEGLLGGLSHWDAEHFLFIAEHGYLYEHNFAFFPGFPLALLVGTELLRPLRGLLSLRSCLLISVASLNFLFFMLAAVALHDLGCLVLHCPHQSFYAALLFCLSPANVFLAAGYSEALFALLTFSAMGQLERGRVWTSVLLFAFATGVRSNGLVSVGFLMHSQCQGFFSSLTMLNPLRQLFKLMASLFLSVFTLGLPFALFQYYAYTQFCLPGSARPIPEPLVQLAVDKGYRIAEGNEPPWCFWDVPLIYSYIQDVYWNVGFLKYYELKQVPNFLLAAPVAILVAWATWTYVTTHPWLCLTLGLQRSKNNKTLEKPDLGFLSPQVFVYVVHAAVLLLFGGLCMHVQVLTRFLGSSTPIMYWFPAHLLQDQEPLLRSLKTVPWKPLAEDSPPGQKVPRNPIMGLLYHWKTCSPVTRYILGYFLTYWLLGLLLHCNFLPWT.

Residues 1–13 (MWPQDPSRKEVLR) are Cytoplasmic-facing. Residues 14 to 34 (FAVSCRILTLMLQALFNAIIP) traverse the membrane as a helical segment. At 35 to 77 (DHHAEAFSPPRLAPSGFVDQLVEGLLGGLSHWDAEHFLFIAEH) the chain is on the lumenal side. The chain crosses the membrane as a helical span at residues 78-98 (GYLYEHNFAFFPGFPLALLVG). At 99 to 113 (TELLRPLRGLLSLRS) the chain is on the cytoplasmic side. The helical transmembrane segment at 114–134 (CLLISVASLNFLFFMLAAVAL) threads the bilayer. Residues 135 to 136 (HD) lie on the Lumenal side of the membrane. A helical transmembrane segment spans residues 137-157 (LGCLVLHCPHQSFYAALLFCL). Over 158–161 (SPAN) the chain is Cytoplasmic. The helical transmembrane segment at 162 to 182 (VFLAAGYSEALFALLTFSAMG) threads the bilayer. The Lumenal segment spans residues 183–192 (QLERGRVWTS). Residues 193 to 213 (VLLFAFATGVRSNGLVSVGFL) form a helical membrane-spanning segment. The Cytoplasmic segment spans residues 214 to 234 (MHSQCQGFFSSLTMLNPLRQL). The chain crosses the membrane as a helical span at residues 235–255 (FKLMASLFLSVFTLGLPFALF). The Lumenal portion of the chain corresponds to 256-327 (QYYAYTQFCL…KYYELKQVPN (72 aa)). Residues 328–348 (FLLAAPVAILVAWATWTYVTT) form a helical membrane-spanning segment. At 349–378 (HPWLCLTLGLQRSKNNKTLEKPDLGFLSPQ) the chain is on the cytoplasmic side. A helical membrane pass occupies residues 379 to 399 (VFVYVVHAAVLLLFGGLCMHV). The Lumenal segment spans residues 400–469 (QVLTRFLGSS…HWKTCSPVTR (70 aa)). Residues 470–490 (YILGYFLTYWLLGLLLHCNFL) traverse the membrane as a helical segment. The Cytoplasmic segment spans residues 491 to 493 (PWT).

Belongs to the PIGV family. In terms of processing, not N-glycosylated.

It localises to the endoplasmic reticulum membrane. The protein operates within glycolipid biosynthesis; glycosylphosphatidylinositol-anchor biosynthesis. Its function is as follows. Alpha-1,6-mannosyltransferase that catalyzes the transfer of the second mannose, via an alpha-1,6 bond, from a dolichol-phosphate-mannose (Dol-P-Man) to the alpha-D-Man-(1-&gt;4)-alpha-D-GlcN-(1-&gt;6)-(1-radyl,2-acyl-sn-glycero-3-phospho)-2-acyl-inositol (also termed H2) intermediate to generate an alpha-D-Man-(1-&gt;6)-alpha-D-Man-(1-&gt;4)-alpha-D-GlcN-(1-&gt;6)-(1-radyl,2-acyl-sn-glycero-3-phospho)-2-acyl-inositol (also termed H3) and participates in the seventh step of the glycosylphosphatidylinositol-anchor biosynthesis. Also transfers the second mannose on a 2-PEtn-alpha-D-Man-(1-&gt;4)-alpha-D-GlcN-(1-&gt;6)-(1-radyl,2-acyl-sn-glycero-3-phospho)-2-acyl-inositol (also termed H5). In Homo sapiens (Human), this protein is GPI alpha-1,6-mannosyltransferase 2.